Here is an 818-residue protein sequence, read N- to C-terminus: Glycerol-3-phosphate acyltransferase (818 aa).

Positions 305–310 (HRSHMD) match the HXXXXD motif motif.

Belongs to the GPAT/DAPAT family.

The protein localises to the cell inner membrane. The catalysed reaction is sn-glycerol 3-phosphate + an acyl-CoA = a 1-acyl-sn-glycero-3-phosphate + CoA. The protein operates within phospholipid metabolism; CDP-diacylglycerol biosynthesis; CDP-diacylglycerol from sn-glycerol 3-phosphate: step 1/3. The sequence is that of Glycerol-3-phosphate acyltransferase from Photorhabdus laumondii subsp. laumondii (strain DSM 15139 / CIP 105565 / TT01) (Photorhabdus luminescens subsp. laumondii).